A 360-amino-acid polypeptide reads, in one-letter code: MLLLLAEYLQQFHKGFAVFQYLSLRGILGVLTALSLALWLGPWMIRTLQIRQIGQAVRNDGPQSHLSKSGTPTMGGALILSAIAVSTLLWADLSNRYVWVVLIVTLAFGAIGWVDDYRKVIEKNSRGLPSRWKYFWQSVFGLAAAVFLYKTAPTSVETTLILPFIKDVTIPLGVGFVVLTYFVIVGSSNAVNLTDGLDGLAIMPTVMVGGALGIFCYLSGNVKFAEYLLIPYVPGSGELIVFCGALIGAGLGFLWFNTYPAQVFMGDVGALALGAALGTIAVIVRQEIVLFIMGGIFVVETLSVVIQVASFKLTGKRVFRMAPIHHHFELKGWPEPRVIVRFWIITVILVLIGLATLKLR.

The next 10 helical transmembrane spans lie at 25 to 45, 73 to 93, 97 to 117, 134 to 154, 168 to 188, 199 to 219, 236 to 256, 263 to 283, 288 to 308, and 338 to 358; these read RGIL…PWMI, TMGG…WADL, YVWV…VDDY, YFWQ…TAPT, VTIP…VGSS, GLAI…CYLS, SGEL…FLWF, VFMG…IAVI, IVLF…VIQV, and VIVR…ATLK.

It belongs to the glycosyltransferase 4 family. MraY subfamily. The cofactor is Mg(2+).

It localises to the cell inner membrane. It catalyses the reaction UDP-N-acetyl-alpha-D-muramoyl-L-alanyl-gamma-D-glutamyl-meso-2,6-diaminopimeloyl-D-alanyl-D-alanine + di-trans,octa-cis-undecaprenyl phosphate = di-trans,octa-cis-undecaprenyl diphospho-N-acetyl-alpha-D-muramoyl-L-alanyl-D-glutamyl-meso-2,6-diaminopimeloyl-D-alanyl-D-alanine + UMP. Its pathway is cell wall biogenesis; peptidoglycan biosynthesis. Its function is as follows. Catalyzes the initial step of the lipid cycle reactions in the biosynthesis of the cell wall peptidoglycan: transfers peptidoglycan precursor phospho-MurNAc-pentapeptide from UDP-MurNAc-pentapeptide onto the lipid carrier undecaprenyl phosphate, yielding undecaprenyl-pyrophosphoryl-MurNAc-pentapeptide, known as lipid I. The sequence is that of Phospho-N-acetylmuramoyl-pentapeptide-transferase from Pseudomonas putida (strain ATCC 700007 / DSM 6899 / JCM 31910 / BCRC 17059 / LMG 24140 / F1).